Consider the following 79-residue polypeptide: Small ribosomal subunit protein bS18 (79 aa).

The protein belongs to the bacterial ribosomal protein bS18 family. Part of the 30S ribosomal subunit. Forms a tight heterodimer with protein bS6.

Binds as a heterodimer with protein bS6 to the central domain of the 16S rRNA, where it helps stabilize the platform of the 30S subunit. The chain is Small ribosomal subunit protein bS18 from Rhodopseudomonas palustris (strain BisB18).